Here is a 150-residue protein sequence, read N- to C-terminus: 3-hydroxyacyl-[acyl-carrier-protein] dehydratase FabZ (150 aa).

Histidine 52 is an active-site residue.

It belongs to the thioester dehydratase family. FabZ subfamily.

The protein resides in the cytoplasm. It catalyses the reaction a (3R)-hydroxyacyl-[ACP] = a (2E)-enoyl-[ACP] + H2O. Functionally, involved in unsaturated fatty acids biosynthesis. Catalyzes the dehydration of short chain beta-hydroxyacyl-ACPs and long chain saturated and unsaturated beta-hydroxyacyl-ACPs. The chain is 3-hydroxyacyl-[acyl-carrier-protein] dehydratase FabZ from Cupriavidus metallidurans (strain ATCC 43123 / DSM 2839 / NBRC 102507 / CH34) (Ralstonia metallidurans).